The sequence spans 811 residues: G-type lectin S-receptor-like serine/threonine-protein kinase LECRK2 (811 aa).

The N-terminal stretch at 1-23 is a signal peptide; that stretch reads MAPLLFLPILQLLLLYCTKSAQA. The 130-residue stretch at 24-153 folds into the Bulb-type lectin domain; sequence QLNISIGSSL…DGATKWESFG (130 aa). At 24-464 the chain is on the extracellular side; it reads QLNISIGSSL…DKKYWILGSS (441 aa). 7 N-linked (GlcNAc...) asparagine glycosylation sites follow: Asn26, Asn39, Asn59, Asn219, Asn226, Asn237, and Asn242. The EGF-like; atypical domain occupies 292–344; it reads PENICQTIQTKVGSGACGFNSYCTFDGTKNTTNCLCPQRYKFFDNERTYKGCR. Intrachain disulfides connect Cys296–Cys314, Cys308–Cys325, Cys327–Cys343, Cys389–Cys411, and Cys393–Cys399. Asn321 carries N-linked (GlcNAc...) asparagine glycosylation. Residues 352-436 enclose the PAN domain; the sequence is CDLDETAAMV…LQATVLLKVP (85 aa). A helical membrane pass occupies residues 465-485; it reads LFFGSSVLVNFLLIFVLLFGT. The Cytoplasmic segment spans residues 486 to 811; sequence YCSITSRKKT…DPSSYISSLA (326 aa). In terms of domain architecture, Protein kinase spans 521–795; sequence GGFHEVLGTG…KVMQMLDGAV (275 aa). ATP is bound by residues 527–535 and Lys551; that span reads LGTGASGIV. The active-site Proton acceptor is the Asp645.

It belongs to the protein kinase superfamily. Ser/Thr protein kinase family.

Its subcellular location is the membrane. It catalyses the reaction L-seryl-[protein] + ATP = O-phospho-L-seryl-[protein] + ADP + H(+). The enzyme catalyses L-threonyl-[protein] + ATP = O-phospho-L-threonyl-[protein] + ADP + H(+). Functionally, involved in resistance against the herbivorous insect brown planthopper (N.lugens, BPH). Member of the BPH3 (BPH resistance locus 3) cluster which contains LECRK1, LECRK2 and LECRK3. This chain is G-type lectin S-receptor-like serine/threonine-protein kinase LECRK2, found in Oryza sativa subsp. japonica (Rice).